Consider the following 578-residue polypeptide: mRNA-decapping enzyme 1B (578 aa).

Ala-2 bears the N-acetylalanine mark. Ser-144 and Ser-145 each carry phosphoserine. Disordered regions lie at residues 187-222 and 246-265; these read AICD…PEPQ and RTFA…TRPV. Positions 248–257 are enriched in basic residues; that stretch reads FAHHHHHHHQ. Residues Ser-274 and Ser-335 each carry the phosphoserine modification. Thr-380 carries the phosphothreonine modification.

This sequence belongs to the DCP1 family. Interacts with DCP1A.

The protein localises to the cytoplasm. It localises to the nucleus. The enzyme catalyses a 5'-end (N(7)-methyl 5'-triphosphoguanosine)-ribonucleoside in mRNA + H2O = N(7)-methyl-GDP + a 5'-end phospho-ribonucleoside in mRNA + 2 H(+). Functionally, may play a role in the degradation of mRNAs, both in normal mRNA turnover and in nonsense-mediated mRNA decay. May remove the 7-methyl guanine cap structure from mRNA molecules, yielding a 5'-phosphorylated mRNA fragment and 7m-GDP. In Mus musculus (Mouse), this protein is mRNA-decapping enzyme 1B (Dcp1b).